A 645-amino-acid polypeptide reads, in one-letter code: Protein disulfide-isomerase A4 (645 aa).

Residues 1-20 (MRPRKAFLLLLLLGLVQLLA) form the signal peptide. Thioredoxin domains are found at residues 21–169 (VAGA…EVSQ) and 158–301 (EEIV…EFLK). Positions 24–58 (AEGPDEDSSNRENAIEDEEEEEEEDDDEEEDDLEV) are disordered. Positions 38–58 (IEDEEEEEEEDDDEEEDDLEV) are enriched in acidic residues. The CXXC signature appears at 91-94 (CGHC). 2 cysteine pairs are disulfide-bonded: cysteine 91–cysteine 94 and cysteine 206–cysteine 209. Lysine 366 is modified (N6-acetyllysine). A Thioredoxin 3 domain is found at 505–636 (FKKGKLKPVI…LSKFIEEHAT (132 aa)). The short motif at 555-558 (CGHC) is the CXXC element. Residues cysteine 555 and cysteine 558 are joined by a disulfide bond. The Prevents secretion from ER signature appears at 642–645 (KEEL).

It belongs to the protein disulfide isomerase family. In terms of assembly, part of a large chaperone multiprotein complex comprising DNAJB11, HSP90B1, HSPA5, HYOU, PDIA2, PDIA4, PDIA6, PPIB, SDF2L1, UGGT1 and very small amounts of ERP29, but not, or at very low levels, CALR nor CANX. Component of a complex containing at least CRELD2, MANF, MATN3 and PDIA4. (Microbial infection) Interacts with Human astrovirus-1 and Human astrovirus-8 spike protein VP25; this interaction seems to facilitate the uncoating during virus entry into the cell. Does not interact with Human astrovirus-2 spike protein VP25.

The protein localises to the endoplasmic reticulum lumen. It is found in the melanosome. It catalyses the reaction Catalyzes the rearrangement of -S-S- bonds in proteins.. The chain is Protein disulfide-isomerase A4 (PDIA4) from Homo sapiens (Human).